The chain runs to 2120 residues: Alpha-tectorin (2120 aa).

An N-terminal signal peptide occupies residues Met-1–Ala-24. N-linked (GlcNAc...) asparagine glycans are attached at residues Asn-34, Asn-215, Asn-258, Asn-277, Asn-445, and Asn-496. The NIDO domain maps to Pro-98–Arg-252. Positions Ser-260 to Cys-312 constitute a VWFC domain. Residues Thr-317–Ser-490 form the VWFD 1 domain. 2 cysteine pairs are disulfide-bonded: Cys-319/Cys-451 and Cys-341/Cys-489. A TIL 1 domain is found at Pro-578–Ser-620. 8 N-linked (GlcNAc...) asparagine glycosylation sites follow: Asn-666, Asn-792, Asn-822, Asn-834, Asn-877, Asn-899, Asn-907, and Asn-928. The 176-residue stretch at Gly-690–Asn-865 folds into the VWFD 2 domain. An intrachain disulfide couples Cys-692 to Cys-828. One can recognise a TIL 2 domain in the interval Cys-963–Cys-1013. 4 N-linked (GlcNAc...) asparagine glycosylation sites follow: Asn-1025, Asn-1041, Asn-1207, and Asn-1337. The VWFD 3 domain occupies Ala-1066–Arg-1250. 2 disulfide bridges follow: Cys-1068–Cys-1213 and Cys-1090–Cys-1249. In terms of domain architecture, TIL 3 spans Cys-1345–Cys-1398. The region spanning Ser-1458 to Asn-1633 is the VWFD 4 domain. Disulfide bonds link Cys-1460–Cys-1594, Cys-1482–Cys-1632, Cys-1684–Cys-1742, Cys-1708–Cys-1751, Cys-1753–Cys-1785, Cys-1773–Cys-1865, and Cys-1804–Cys-1824. N-linked (GlcNAc...) asparagine glycans are attached at residues Asn-1511, Asn-1537, Asn-1723, Asn-1739, Asn-1761, Asn-1818, Asn-1831, Asn-1847, Asn-1887, and Asn-1906. The ZP domain occupies Thr-1772–His-2026. Intrachain disulfides connect Cys-1947–Cys-2007, Cys-1968–Cys-2023, and Cys-2012–Cys-2019. Asn-2058 is lipidated: GPI-anchor amidated asparagine. Residues Gly-2059 to Ser-2120 constitute a propeptide, removed in mature form.

May form homomeric filament after self-association or heteromeric filament after association with beta-tectorin. Post-translationally, at least 3 products of tectorin seem to exist: HMM, MMM and LMM. They may be generated by active processing or the result of proteolysis occurring between intrachain disulfide bonds. The presence of a hydrophobic C-terminus preceded by a potential cleavage site strongly suggests that tectorins are synthesized as glycosylphosphatidylinositol-linked, membrane-bound precursors. Tectorins are targeted to the apical surface of the inner ear epithelia by the lipid and proteolytically released into the extracellular compartment. In terms of tissue distribution, expressed in the inner ear.

It localises to the cell membrane. It is found in the secreted. The protein resides in the extracellular space. The protein localises to the extracellular matrix. In terms of biological role, one of the major non-collagenous components of the tectorial membrane. The tectorial membrane is an extracellular matrix of the inner ear that covers the neuroepithelium of the cochlea and contacts the stereocilia bundles of specialized sensory hair cells. Sound induces movement of these hair cells relative to the tectorial membrane, deflects the stereocilia and leads to fluctuations in hair-cell membrane potential, transducing sound into electrical signals. This Gallus gallus (Chicken) protein is Alpha-tectorin (TECTA).